A 535-amino-acid polypeptide reads, in one-letter code: Bifunctional purine biosynthesis protein PurH (535 aa).

Residues 6-151 (TRLPIRRALI…KNHKDVAIVV (146 aa)) form the MGS-like domain.

This sequence belongs to the PurH family.

The enzyme catalyses (6R)-10-formyltetrahydrofolate + 5-amino-1-(5-phospho-beta-D-ribosyl)imidazole-4-carboxamide = 5-formamido-1-(5-phospho-D-ribosyl)imidazole-4-carboxamide + (6S)-5,6,7,8-tetrahydrofolate. It carries out the reaction IMP + H2O = 5-formamido-1-(5-phospho-D-ribosyl)imidazole-4-carboxamide. It participates in purine metabolism; IMP biosynthesis via de novo pathway; 5-formamido-1-(5-phospho-D-ribosyl)imidazole-4-carboxamide from 5-amino-1-(5-phospho-D-ribosyl)imidazole-4-carboxamide (10-formyl THF route): step 1/1. The protein operates within purine metabolism; IMP biosynthesis via de novo pathway; IMP from 5-formamido-1-(5-phospho-D-ribosyl)imidazole-4-carboxamide: step 1/1. This is Bifunctional purine biosynthesis protein PurH from Pseudomonas aeruginosa (strain LESB58).